We begin with the raw amino-acid sequence, 38 residues long: Photosystem II reaction center protein L (38 aa).

A helical transmembrane segment spans residues 17 to 37 (SLYWGLLLIFVLAILFSSYIF).

It belongs to the PsbL family. In terms of assembly, PSII is composed of 1 copy each of membrane proteins PsbA, PsbB, PsbC, PsbD, PsbE, PsbF, PsbH, PsbI, PsbJ, PsbK, PsbL, PsbM, PsbT, PsbX, PsbY, PsbZ, Psb30/Ycf12, at least 3 peripheral proteins of the oxygen-evolving complex and a large number of cofactors. It forms dimeric complexes.

Its subcellular location is the plastid. It is found in the chloroplast thylakoid membrane. Its function is as follows. One of the components of the core complex of photosystem II (PSII). PSII is a light-driven water:plastoquinone oxidoreductase that uses light energy to abstract electrons from H(2)O, generating O(2) and a proton gradient subsequently used for ATP formation. It consists of a core antenna complex that captures photons, and an electron transfer chain that converts photonic excitation into a charge separation. This subunit is found at the monomer-monomer interface and is required for correct PSII assembly and/or dimerization. In Mesostigma viride (Green alga), this protein is Photosystem II reaction center protein L.